Reading from the N-terminus, the 291-residue chain is Formamidopyrimidine-DNA glycosylase (291 aa).

The Schiff-base intermediate with DNA role is filled by Pro-2. The active-site Proton donor is the Glu-3. Catalysis depends on Lys-58, which acts as the Proton donor; for beta-elimination activity. 3 residues coordinate DNA: His-104, Arg-127, and Arg-172. The segment at 257-291 adopts an FPG-type zinc-finger fold; the sequence is FVYDRAGLPCRACGTPIRQIVQGQRSTFCCPTCQR. Catalysis depends on Arg-281, which acts as the Proton donor; for delta-elimination activity.

The protein belongs to the FPG family. In terms of assembly, monomer. Zn(2+) serves as cofactor.

The enzyme catalyses Hydrolysis of DNA containing ring-opened 7-methylguanine residues, releasing 2,6-diamino-4-hydroxy-5-(N-methyl)formamidopyrimidine.. It carries out the reaction 2'-deoxyribonucleotide-(2'-deoxyribose 5'-phosphate)-2'-deoxyribonucleotide-DNA = a 3'-end 2'-deoxyribonucleotide-(2,3-dehydro-2,3-deoxyribose 5'-phosphate)-DNA + a 5'-end 5'-phospho-2'-deoxyribonucleoside-DNA + H(+). In terms of biological role, involved in base excision repair of DNA damaged by oxidation or by mutagenic agents. Acts as a DNA glycosylase that recognizes and removes damaged bases. Has a preference for oxidized purines, such as 7,8-dihydro-8-oxoguanine (8-oxoG). Has AP (apurinic/apyrimidinic) lyase activity and introduces nicks in the DNA strand. Cleaves the DNA backbone by beta-delta elimination to generate a single-strand break at the site of the removed base with both 3'- and 5'-phosphates. This Ralstonia pickettii (strain 12J) protein is Formamidopyrimidine-DNA glycosylase.